Here is a 962-residue protein sequence, read N- to C-terminus: Protease 3 (962 aa).

The first 23 residues, Met1–Ala23, serve as a signal peptide directing secretion. His88 contributes to the Zn(2+) binding site. Glu91 acts as the Proton acceptor in catalysis. The Zn(2+) site is built by His92 and Glu169.

It belongs to the peptidase M16 family. Monomer. The cofactor is Zn(2+).

It localises to the periplasm. It carries out the reaction Preferential cleavage of 16-Tyr-|-Leu-17 and 25-Phe-|-Tyr-26 bonds of oxidized insulin B chain. Also acts on other substrates of Mw less than 7 kDa such as insulin and glucagon.. Endopeptidase that degrades small peptides of less than 7 kDa, such as glucagon and insulin. The polypeptide is Protease 3 (ptrA) (Shigella flexneri).